The primary structure comprises 212 residues: phospholipase A2 inhibitor and Ly6/PLAUR domain-containing protein (212 aa).

A signal peptide spans 1–24 (MILFRRHRTFLLAFTLLCTLLGLG). Positions 27-117 (LTCEVCKGSG…NSGSVPPPLN (91 aa)) constitute a UPAR/Ly6 domain. Intrachain disulfides connect cysteine 29–cysteine 53, cysteine 32–cysteine 39, cysteine 46–cysteine 74, cysteine 80–cysteine 101, cysteine 102–cysteine 107, cysteine 126–cysteine 152, and cysteine 145–cysteine 173.

It belongs to the CNF-like-inhibitor family.

It localises to the secreted. This Mus musculus (Mouse) protein is phospholipase A2 inhibitor and Ly6/PLAUR domain-containing protein (Pinlyp).